Reading from the N-terminus, the 562-residue chain is Arginine--tRNA ligase (562 aa).

The short motif at A130–H140 is the 'HIGH' region element.

It belongs to the class-I aminoacyl-tRNA synthetase family. Monomer.

The protein resides in the cytoplasm. The enzyme catalyses tRNA(Arg) + L-arginine + ATP = L-arginyl-tRNA(Arg) + AMP + diphosphate. The polypeptide is Arginine--tRNA ligase (Geobacter metallireducens (strain ATCC 53774 / DSM 7210 / GS-15)).